The sequence spans 209 residues: Lipid A acyltransferase PagP (209 aa).

A signal peptide spans 1 to 24 (MHLKRALITLSLITLPIIPFSSYA). Residues H81, D124, and S125 contribute to the active site.

This sequence belongs to the lipid A palmitoyltransferase family. As to quaternary structure, homodimer.

It is found in the cell outer membrane. It catalyses the reaction a lipid A + a 1,2-diacyl-sn-glycero-3-phosphocholine = a hepta-acyl lipid A + a 2-acyl-sn-glycero-3-phosphocholine. The catalysed reaction is a lipid IVA + a 1,2-diacyl-sn-glycero-3-phosphocholine = a lipid IVB + a 2-acyl-sn-glycero-3-phosphocholine. It carries out the reaction a lipid IIA + a 1,2-diacyl-sn-glycero-3-phosphocholine = a lipid IIB + a 2-acyl-sn-glycero-3-phosphocholine. Transfers a fatty acid residue from the sn-1 position of a phospholipid to the N-linked hydroxyfatty acid chain on the proximal unit of lipid A or its precursors. In Pectobacterium parmentieri (strain WPP163) (Pectobacterium wasabiae (strain WPP163)), this protein is Lipid A acyltransferase PagP.